Here is a 292-residue protein sequence, read N- to C-terminus: Transforming growth factor-beta receptor type 3-like protein (292 aa).

A signal peptide spans 1–16 (MLGTVLLLALLPGITT). The region spanning 17–170 (LPSGPPAPPF…APAPLTPPPP (154 aa)) is the ZP; truncated domain. The Extracellular portion of the chain corresponds to 17–244 (LPSGPPAPPF…PAPAALEPAP (228 aa)). C85 and C147 are joined by a disulfide. The interval 160-236 (RAPAPLTPPP…AVRPEPPAPA (77 aa)) is disordered. Composition is skewed to pro residues over residues 164 to 175 (PLTPPPPPPPSR) and 213 to 222 (PRPPPRPPKS). A helical transmembrane segment spans residues 245–265 (VVALVLAAFVLGAALAAGLGL). Topologically, residues 266-292 (VCAHSAPHAPGPPARASPSGPQPRRSQ) are cytoplasmic. Positions 273 to 292 (HAPGPPARASPSGPQPRRSQ) are disordered. Positions 281-292 (ASPSGPQPRRSQ) are enriched in low complexity.

Post-translationally, glycosylated. Expressed in pituitary gland gonadotrope cells.

The protein resides in the cell membrane. In terms of biological role, expressed in gonadotrope cells, acts as an inhibin B coreceptor and regulates follicle-stimulating hormone (FSH) levels and female fertility. The sequence is that of Transforming growth factor-beta receptor type 3-like protein from Homo sapiens (Human).